The sequence spans 100 residues: Small ribosomal subunit protein uS14c (100 aa).

The protein belongs to the universal ribosomal protein uS14 family. Part of the 30S ribosomal subunit.

It localises to the plastid. It is found in the cyanelle. In terms of biological role, binds 16S rRNA, required for the assembly of 30S particles. This Cyanophora paradoxa protein is Small ribosomal subunit protein uS14c.